Reading from the N-terminus, the 114-residue chain is Abscisic stress-ripening protein 2 (114 aa).

2 disordered regions span residues 1-25 and 88-114; these read MAEEKHQHHHHLFHHKNKEDEGGPV and FHEHHQKKDAKKEKKEVEGGHHHHHHY. Over residues 7-16 the composition is skewed to basic residues; it reads QHHHHLFHHK. Basic and acidic residues predominate over residues 97-107; it reads AKKEKKEVEGG.

Belongs to the abscisic acid and water stress-induced protein family.

This Solanum lycopersicum (Tomato) protein is Abscisic stress-ripening protein 2.